The primary structure comprises 430 residues: Alpha-(1-&gt;3)-arabinofuranosyltransferase (430 aa).

A run of 10 helical transmembrane segments spans residues 26 to 46 (APSTATVLRSVLWPIAILSVI), 114 to 134 (WYISFNVLAFLIAAYLMLRIF), 136 to 156 (YTLSSVAAPALVLAMFCTESV), 160 to 180 (LVFTNINGCMLLGAVLFFRWL), 194 to 214 (AIGLTLVVKPSLAPLLLLPVL), 218 to 238 (FYTLITAFGVPLVFNIAAWPL), 276 to 296 (WLILLLRVVFLLLAVGSLWLL), 307 to 327 (FWLLTSSGVLLTASFLLLSLG), 352 to 372 (WPAWLAIYGFMTMDRWLLGHW), and 381 to 401 (YMKITYGWSLMLVVVFCVLYF).

The protein belongs to the glycosyltransferase 87 family.

Its subcellular location is the cell membrane. The enzyme catalyses Adds an alpha-D-arabinofuranosyl group from trans,octacis-decaprenylphospho-beta-D-arabinofuranose at the 3-O-position of an alpha-(1-&gt;5)-arabinofuranan chain attached to a beta-(1-&gt;5)-galactofuranan chain.. It functions in the pathway cell wall biogenesis; cell wall polysaccharide biosynthesis. Its function is as follows. Involved in the biosynthesis of the arabinogalactan (AG) region of the mycolylarabinogalactan-peptidoglycan (mAGP) complex, an essential component of the mycobacterial cell wall. Catalyzes the addition of an arabinofuranosyl (Araf) residue from the sugar donor beta-D-arabinofuranosyl-1-monophosphoryldecaprenol (DPA) on the C-3 of an alpha-(1-&gt;5)-linked Araf from the arabinan backbone of AG. The sequence is that of Alpha-(1-&gt;3)-arabinofuranosyltransferase (aftC) from Mycolicibacterium smegmatis (strain ATCC 700084 / mc(2)155) (Mycobacterium smegmatis).